A 259-amino-acid polypeptide reads, in one-letter code: Heat-labile enterotoxin IIA, A chain (259 aa).

The first 18 residues, 1–18, serve as a signal peptide directing secretion; the sequence is MIKHVLLFFVFISFSVSA. 23-37 contacts NAD(+); that stretch reads RADSRTPDEIRRAGG. Residue E128 is part of the active site. The cysteines at positions 203 and 215 are disulfide-linked.

This sequence belongs to the enterotoxin A family. As to quaternary structure, heterohexamer of one A chain and of five B chains.

The biological activity of the toxin is produced by the A chain, which activates intracellular adenyl cyclase. In Escherichia coli, this protein is Heat-labile enterotoxin IIA, A chain.